Reading from the N-terminus, the 1382-residue chain is DNA-directed RNA polymerase subunit beta (1382 aa).

The protein belongs to the RNA polymerase beta chain family. As to quaternary structure, the RNAP catalytic core consists of 2 alpha, 1 beta, 1 beta' and 1 omega subunit. When a sigma factor is associated with the core the holoenzyme is formed, which can initiate transcription.

The enzyme catalyses RNA(n) + a ribonucleoside 5'-triphosphate = RNA(n+1) + diphosphate. Functionally, DNA-dependent RNA polymerase catalyzes the transcription of DNA into RNA using the four ribonucleoside triphosphates as substrates. The chain is DNA-directed RNA polymerase subunit beta from Anaplasma marginale (strain Florida).